Consider the following 424-residue polypeptide: SWI/SNF and RSC complexes subunit arp42 (424 aa).

The protein belongs to the actin family. As to quaternary structure, component of the RSC complex composed of at least arp9, arp42, rsc1, rsc4, rsc7, rsc9, rsc58, sfh1, snf21, ssr1, ssr2, ssr3 and ssr4. The complex interacts with histone and histone variant components of centromeric chromatin. Component of the SWI/SNF global transcription activator complex composed of at least arp9, arp42, snf5, snf22, snf30, sbf59, sol1, ssr1, ssr2, ssr3, ssr4 and tfg3.

It localises to the cytoplasm. It is found in the nucleus. Its function is as follows. Component of the chromatin structure remodeling complex (RSC), which is involved in transcription regulation and nucleosome positioning. Controls particularly membrane and organelle development genes. Part of the SWI/SNF complex, an ATP-dependent chromatin remodeling complex, required for the positive and negative regulation of gene expression of a large number of genes. It changes chromatin structure by altering DNA-histone contacts within a nucleosome, leading eventually to a change in nucleosome position, thus facilitating or repressing binding of gene-specific transcription factors. This is SWI/SNF and RSC complexes subunit arp42 (arp42) from Schizosaccharomyces pombe (strain 972 / ATCC 24843) (Fission yeast).